We begin with the raw amino-acid sequence, 89 residues long: Large ribosomal subunit protein bL27 (89 aa).

The tract at residues 1–21 (MAHKKAGGSSRNGRDSAGRRL) is disordered.

The protein belongs to the bacterial ribosomal protein bL27 family.

This Erythrobacter litoralis (strain HTCC2594) protein is Large ribosomal subunit protein bL27.